A 107-amino-acid polypeptide reads, in one-letter code: Putative septation protein SpoVG (107 aa).

The tract at residues 82–107 (ETDEVIPDKNAQPSSDSEDNGSEEEA) is disordered. The span at 97-107 (DSEDNGSEEEA) shows a compositional bias: acidic residues.

The protein belongs to the SpoVG family.

Could be involved in septation. The sequence is that of Putative septation protein SpoVG from Staphylococcus carnosus (strain TM300).